The sequence spans 105 residues: Large ribosomal subunit protein uL24 (105 aa).

Belongs to the universal ribosomal protein uL24 family. As to quaternary structure, part of the 50S ribosomal subunit.

Functionally, one of two assembly initiator proteins, it binds directly to the 5'-end of the 23S rRNA, where it nucleates assembly of the 50S subunit. In terms of biological role, one of the proteins that surrounds the polypeptide exit tunnel on the outside of the subunit. The polypeptide is Large ribosomal subunit protein uL24 (Azoarcus sp. (strain BH72)).